Consider the following 248-residue polypeptide: PF03932 family protein CutC (248 aa).

The protein belongs to the CutC family. Homodimer.

Its subcellular location is the cytoplasm. This chain is PF03932 family protein CutC, found in Escherichia coli (strain 55989 / EAEC).